A 544-amino-acid polypeptide reads, in one-letter code: Probable protein kinase UbiB (544 aa).

Residues 123–501 (DFDIKPLASA…KRQQGTGKFL (379 aa)) form the Protein kinase domain. ATP-binding positions include 129 to 137 (LASASIAQV) and K152. The active-site Proton acceptor is the D287. 2 helical membrane-spanning segments follow: residues 496–516 (GTGK…AIWI) and 519–539 (QLEP…LLSW).

The protein belongs to the ABC1 family. UbiB subfamily.

It localises to the cell inner membrane. Its pathway is cofactor biosynthesis; ubiquinone biosynthesis [regulation]. In terms of biological role, is probably a protein kinase regulator of UbiI activity which is involved in aerobic coenzyme Q (ubiquinone) biosynthesis. In Vibrio cholerae serotype O1 (strain ATCC 39541 / Classical Ogawa 395 / O395), this protein is Probable protein kinase UbiB.